A 56-amino-acid chain; its full sequence is Secreted virulence factor CLU5a (56 aa).

Positions 1–18 (MKVSLTLLATLCASLASA) are cleaved as a signal peptide.

This sequence belongs to the MC69 virulence factor family. Homodimer; disulfide-linked. Dimerization can possibly extend to multimerisation.

It localises to the secreted. Functionally, secreted protein required for appressorial penetration of intact host epidermal cells and for pathogenicit, but not for subsequent biotrophic and necrotrophic colonization of leaves. The protein is Secreted virulence factor CLU5a of Colletotrichum graminicola (strain M1.001 / M2 / FGSC 10212) (Maize anthracnose fungus).